We begin with the raw amino-acid sequence, 228 residues long: Ribonuclease 3 (228 aa).

The RNase III domain maps to 5 to 128 (LNRLMARLGY…IIGAMLLDGG (124 aa)). Glu-41 contacts Mg(2+). The active site involves Asp-45. Mg(2+)-binding residues include Asp-114 and Glu-117. Residue Glu-117 is part of the active site. A DRBM domain is found at 155–225 (DAKTRLQEWL…ASLALEWLEQ (71 aa)).

It belongs to the ribonuclease III family. As to quaternary structure, homodimer. Mg(2+) serves as cofactor.

It is found in the cytoplasm. The catalysed reaction is Endonucleolytic cleavage to 5'-phosphomonoester.. Its function is as follows. Digests double-stranded RNA. Involved in the processing of primary rRNA transcript to yield the immediate precursors to the large and small rRNAs (23S and 16S). Processes some mRNAs, and tRNAs when they are encoded in the rRNA operon. Processes pre-crRNA and tracrRNA of type II CRISPR loci if present in the organism. The sequence is that of Ribonuclease 3 from Alcanivorax borkumensis (strain ATCC 700651 / DSM 11573 / NCIMB 13689 / SK2).